A 497-amino-acid chain; its full sequence is Membrane-bound lytic murein transglycosylase F (497 aa).

Residues M1–E29 form the signal peptide. Residues K30 to V267 form a non-LT domain region. An LT domain region spans residues D268–L497. E314 is an active-site residue. Residues V464–L497 are disordered. Low complexity predominate over residues V486–L497.

It in the N-terminal section; belongs to the bacterial solute-binding protein 3 family. In the C-terminal section; belongs to the transglycosylase Slt family.

Its subcellular location is the cell outer membrane. The enzyme catalyses Exolytic cleavage of the (1-&gt;4)-beta-glycosidic linkage between N-acetylmuramic acid (MurNAc) and N-acetylglucosamine (GlcNAc) residues in peptidoglycan, from either the reducing or the non-reducing ends of the peptidoglycan chains, with concomitant formation of a 1,6-anhydrobond in the MurNAc residue.. Its function is as follows. Murein-degrading enzyme that degrades murein glycan strands and insoluble, high-molecular weight murein sacculi, with the concomitant formation of a 1,6-anhydromuramoyl product. Lytic transglycosylases (LTs) play an integral role in the metabolism of the peptidoglycan (PG) sacculus. Their lytic action creates space within the PG sacculus to allow for its expansion as well as for the insertion of various structures such as secretion systems and flagella. The protein is Membrane-bound lytic murein transglycosylase F of Pseudomonas syringae pv. tomato (strain ATCC BAA-871 / DC3000).